We begin with the raw amino-acid sequence, 341 residues long: L-threonine 3-dehydrogenase (341 aa).

Residue Cys38 participates in Zn(2+) binding. Catalysis depends on charge relay system residues Thr40 and His43. Residues His63, Glu64, Cys93, Cys96, Cys99, and Cys107 each coordinate Zn(2+). Residues Ile175, Asp195, Arg200, 262 to 264 (LGI), and 286 to 287 (IY) contribute to the NAD(+) site.

This sequence belongs to the zinc-containing alcohol dehydrogenase family. Homotetramer. Zn(2+) is required as a cofactor.

The protein localises to the cytoplasm. The enzyme catalyses L-threonine + NAD(+) = (2S)-2-amino-3-oxobutanoate + NADH + H(+). It functions in the pathway amino-acid degradation; L-threonine degradation via oxydo-reductase pathway; glycine from L-threonine: step 1/2. Catalyzes the NAD(+)-dependent oxidation of L-threonine to 2-amino-3-ketobutyrate. The sequence is that of L-threonine 3-dehydrogenase from Shewanella oneidensis (strain ATCC 700550 / JCM 31522 / CIP 106686 / LMG 19005 / NCIMB 14063 / MR-1).